We begin with the raw amino-acid sequence, 207 residues long: Ribonuclease HII (207 aa).

Residues 10–199 form the RNase H type-2 domain; it reads RLIAGVDEVG…VRNALLDAEL (190 aa). A divalent metal cation-binding residues include D16, E17, and D108.

This sequence belongs to the RNase HII family. It depends on Mn(2+) as a cofactor. The cofactor is Mg(2+).

It localises to the cytoplasm. It catalyses the reaction Endonucleolytic cleavage to 5'-phosphomonoester.. Endonuclease that specifically degrades the RNA of RNA-DNA hybrids. This chain is Ribonuclease HII, found in Erwinia tasmaniensis (strain DSM 17950 / CFBP 7177 / CIP 109463 / NCPPB 4357 / Et1/99).